A 469-amino-acid polypeptide reads, in one-letter code: Ufm1-specific protease 2 (469 aa).

Methionine 1 is subject to N-acetylmethionine. Catalysis depends on residues cysteine 302, aspartate 426, and histidine 428.

Belongs to the peptidase C78 family. Expressed in brain.

It localises to the endoplasmic reticulum. The protein resides in the cytoplasm. Its subcellular location is the nucleus. Thiol-dependent isopeptidase that specifically cleaves UFM1, a ubiquitin-like modifier protein, from conjugated proteins, such as CD274/PD-L1, CYB5R3, DDRGK1, MRE11, RPL26/uL24, TRIP4 and RPL26/uL24. While it is also able to mediate the processing of UFM1 precursors, a prerequisite for conjugation reactions, UFSP2 mainly acts as a protein deUFMylase that mediates deconjugation of UFM1 from target proteins. Mediates deUFMylation of RPL26/uL24, a critical step to release the UFM1 ribosome E3 ligase (UREL) complex during the recycling of 60S ribosome subunits from the endoplasmic reticulum. Catalyzes deUFMylation of TRIP4, regulating intracellular nuclear receptors transactivation and thereby regulate cell proliferation and differentiation. This is Ufm1-specific protease 2 from Homo sapiens (Human).